A 430-amino-acid chain; its full sequence is Glycine reductase complex component B subunits alpha and beta (430 aa).

Cys-242 acts as the Schiff-base intermediate with substrate; via pyruvic acid in catalysis. Cys-242 carries the post-translational modification Pyruvic acid (Cys).

Heterohexamer of two alpha, two beta and two gamma subunits. Component of the glycine reductase complex, together with components A and C. PB is substrate specific. The peptide chain is cleaved into beta and alpha chains, and the alpha chain N-terminal cysteine is deaminated and oxidized to form a reactive pyruvoyl group.

The enzyme catalyses acetyl phosphate + [thioredoxin]-disulfide + NH4(+) + H2O = [thioredoxin]-dithiol + glycine + phosphate + H(+). In terms of biological role, in the first step of glycine reductase, the substrate is bound to component PB via a Schiff base intermediate. Then the PB-activated substrate is nucleophilically attacked by the selenol anion of component PA to transform it to a carboxymethylated selenoether and the respective amine. By action of component PC, acetyl phosphate is formed, leaving component PA in its oxidized state. Finally component PA becomes reduced by the thioredoxin system to start a new catalytic cycle of reductive deamination. The chain is Glycine reductase complex component B subunits alpha and beta (grdE) from Acetoanaerobium sticklandii (strain ATCC 12662 / DSM 519 / JCM 1433 / CCUG 9281 / NCIMB 10654 / HF) (Clostridium sticklandii).